The sequence spans 151 residues: Probable ribonuclease P/MRP protein subunit POP5 (151 aa).

This sequence belongs to the eukaryotic/archaeal RNase P protein component 2 family. In terms of assembly, component of nuclear RNase P and RNase MRP ribonucleoproteins. Interacts with GAF1/RPP30.

The protein localises to the nucleus. Its subcellular location is the nucleolus. Functionally, essential protein required during embryogenesis. Component of ribonuclease P, a protein complex that generates mature tRNA molecules by cleaving their 5'-ends. Also a component of RNase MRP. This is Probable ribonuclease P/MRP protein subunit POP5 (EMB1687) from Arabidopsis thaliana (Mouse-ear cress).